Consider the following 77-residue polypeptide: Small ribosomal subunit protein uS17 (77 aa).

It belongs to the universal ribosomal protein uS17 family. Part of the 30S ribosomal subunit.

Its function is as follows. One of the primary rRNA binding proteins, it binds specifically to the 5'-end of 16S ribosomal RNA. This is Small ribosomal subunit protein uS17 from Rickettsia canadensis (strain McKiel).